A 60-amino-acid polypeptide reads, in one-letter code: Potassium channel toxin alpha-KTx 12.5 (60 aa).

The first 22 residues, 1-22, serve as a signal peptide directing secretion; it reads MNKLPILIFMLLVCSMFISSDC. 3 disulfide bridges follow: cysteine 30/cysteine 51, cysteine 36/cysteine 56, and cysteine 40/cysteine 58.

This sequence belongs to the short scorpion toxin superfamily. Potassium channel inhibitor family. Alpha-KTx 12 subfamily. In terms of tissue distribution, expressed by the venom gland.

Its subcellular location is the secreted. Functionally, this recombinant toxin inhibits the mammalian voltage-gated potassium channels Kv1.3/KCNA3 (IC(50)=28 nM). Kv1.1/KCNA1 and Kv1.2/KCNA2 potassium channels are also weakly inhibited (IC(50)=1.73 uM and IC(50)=12.63 uM, respectively). In Lychas mucronatus (Chinese swimming scorpion), this protein is Potassium channel toxin alpha-KTx 12.5.